A 496-amino-acid polypeptide reads, in one-letter code: Proline--tRNA ligase (496 aa).

The protein belongs to the class-II aminoacyl-tRNA synthetase family. ProS type 3 subfamily. In terms of assembly, homodimer.

The protein resides in the cytoplasm. The enzyme catalyses tRNA(Pro) + L-proline + ATP = L-prolyl-tRNA(Pro) + AMP + diphosphate. Catalyzes the attachment of proline to tRNA(Pro) in a two-step reaction: proline is first activated by ATP to form Pro-AMP and then transferred to the acceptor end of tRNA(Pro). The sequence is that of Proline--tRNA ligase from Phocaeicola vulgatus (strain ATCC 8482 / DSM 1447 / JCM 5826 / CCUG 4940 / NBRC 14291 / NCTC 11154) (Bacteroides vulgatus).